Consider the following 473-residue polypeptide: Ribulose bisphosphate carboxylase large chain (473 aa).

2 residues coordinate substrate: Asn-116 and Thr-166. The active-site Proton acceptor is Lys-168. Substrate is bound at residue Lys-170. Positions 194, 196, and 197 each coordinate Mg(2+). Lys-194 is subject to N6-carboxylysine. His-287 acts as the Proton acceptor in catalysis. Residues Arg-288, His-320, and Ser-372 each contribute to the substrate site.

Belongs to the RuBisCO large chain family. Type I subfamily. Heterohexadecamer of 8 large chains and 8 small chains. In R.sphaeroides the complex is approximately 500 kDa. Mg(2+) serves as cofactor.

The enzyme catalyses 2 (2R)-3-phosphoglycerate + 2 H(+) = D-ribulose 1,5-bisphosphate + CO2 + H2O. It carries out the reaction D-ribulose 1,5-bisphosphate + O2 = 2-phosphoglycolate + (2R)-3-phosphoglycerate + 2 H(+). Functionally, ruBisCO catalyzes two reactions: the carboxylation of D-ribulose 1,5-bisphosphate, the primary event in carbon dioxide fixation, as well as the oxidative fragmentation of the pentose substrate. Both reactions occur simultaneously and in competition at the same active site. This chain is Ribulose bisphosphate carboxylase large chain, found in Thiobacillus denitrificans (strain ATCC 25259 / T1).